We begin with the raw amino-acid sequence, 473 residues long: NAC domain-containing protein 68 (473 aa).

Residues glycine 4–lysine 154 form the NAC domain. The DNA-binding element occupies isoleucine 108 to isoleucine 160. Residues aspartate 326 to serine 380 form a disordered region. Low complexity-rich tracts occupy residues serine 340–serine 354 and serine 364–aspartate 379. Residues phenylalanine 446–isoleucine 468 form a helical membrane-spanning segment.

It is found in the membrane. The protein resides in the nucleus. Its function is as follows. Transcription activator activated by proteolytic cleavage through regulated intramembrane proteolysis (RIP) mediated by calpain or its functional homolog. Regulates cytokinin signaling during cell division. This is NAC domain-containing protein 68 (NAC68) from Arabidopsis thaliana (Mouse-ear cress).